Here is a 94-residue protein sequence, read N- to C-terminus: Large ribosomal subunit protein eL43A (94 aa).

The C4-type zinc-finger motif lies at cysteine 39–cysteine 62.

The protein belongs to the eukaryotic ribosomal protein eL43 family. Component of the large ribosomal subunit (LSU). Mature yeast ribosomes consist of a small (40S) and a large (60S) subunit. The 40S small subunit contains 1 molecule of ribosomal RNA (18S rRNA) and at least 33 different proteins. The large 60S subunit contains 3 rRNA molecules (25S, 5.8S and 5S rRNA) and at least 46 different proteins.

The protein localises to the cytoplasm. Its function is as follows. Component of the ribosome, a large ribonucleoprotein complex responsible for the synthesis of proteins in the cell. The small ribosomal subunit (SSU) binds messenger RNAs (mRNAs) and translates the encoded message by selecting cognate aminoacyl-transfer RNA (tRNA) molecules. The large subunit (LSU) contains the ribosomal catalytic site termed the peptidyl transferase center (PTC), which catalyzes the formation of peptide bonds, thereby polymerizing the amino acids delivered by tRNAs into a polypeptide chain. The nascent polypeptides leave the ribosome through a tunnel in the LSU and interact with protein factors that function in enzymatic processing, targeting, and the membrane insertion of nascent chains at the exit of the ribosomal tunnel. The chain is Large ribosomal subunit protein eL43A (rpl4301) from Schizosaccharomyces pombe (strain 972 / ATCC 24843) (Fission yeast).